Here is a 391-residue protein sequence, read N- to C-terminus: 3-ketoacyl-CoA thiolase (391 aa).

Cys-95 (acyl-thioester intermediate) is an active-site residue. Active-site proton acceptor residues include His-347 and Cys-377.

It belongs to the thiolase-like superfamily. Thiolase family. As to quaternary structure, heterotetramer of two alpha chains (FadB) and two beta chains (FadA).

It is found in the cytoplasm. The catalysed reaction is an acyl-CoA + acetyl-CoA = a 3-oxoacyl-CoA + CoA. It participates in lipid metabolism; fatty acid beta-oxidation. In terms of biological role, catalyzes the final step of fatty acid oxidation in which acetyl-CoA is released and the CoA ester of a fatty acid two carbons shorter is formed. This Pseudomonas putida (Arthrobacter siderocapsulatus) protein is 3-ketoacyl-CoA thiolase.